Consider the following 625-residue polypeptide: Vacuolar-sorting receptor 7 (625 aa).

Residues 1 to 26 (MGLVNGRASLTFLLAALTIIAMVVEA) form the signal peptide. Residues 27 to 564 (RFVVEKESIS…CIERYGSKTA (538 aa)) lie on the Lumenal side of the membrane. The region spanning 58 to 166 (DYGGFLIGSV…SFGDDLRQGF (109 aa)) is the PA domain. Residues Asn292, Asn400, and Asn432 are each glycosylated (N-linked (GlcNAc...) asparagine). EGF-like domains are found at residues 414–464 (ETNE…TSCT) and 467–513 (GPAR…LTCE). Cystine bridges form between Cys418–Cys436, Cys425–Cys445, Cys447–Cys463, Cys471–Cys491, Cys478–Cys499, Cys501–Cys512, and Cys542–Cys555. Residues 514–556 (DINECKERSVCQCSGCRCKNSWGGYKCSCSGDRLYINDQDTCI) form the EGF-like 3; calcium-binding domain. The helical transmembrane segment at 565-585 (WWLTFLILAIVAVAGLAGYIF) threads the bilayer. Topologically, residues 586-625 (YKYRFRSYMDSEIMTIMSQYMPLESQRAREVPSEAEPFTL) are cytoplasmic. The short motif at 605–608 (YMPL) is the Tyrosine-based internalization motif element.

The protein belongs to the VSR (BP-80) family. As to expression, expressed at low levels in seedlings, roots, young leaves, flowers and siliques.

The protein localises to the golgi apparatus membrane. In terms of biological role, vacuolar-sorting receptor (VSR) involved in clathrin-coated vesicles sorting from Golgi apparatus to vacuoles. The sequence is that of Vacuolar-sorting receptor 7 (VSR7) from Arabidopsis thaliana (Mouse-ear cress).